The following is a 325-amino-acid chain: MSWITPDLIEILLSILKAVVILLVVVTCGAFMSFGERRLLGLFQNRYGPNRVGWGGSLQLVADMIKMFFKEDWVPKFSDRVIFTLAPMIAFTSLLLSFAIVPVSPNWVVADLNIGILFFLMMAGLAVYAVLFAGWSSNNKYSLLGAMRASAQTVSYEVFLGLSLMGVVAQAGSFNMTDIVNNQAHLWNVIPQFFGFVTFAIAGVAVCHRHPFDQPEAEQELADGYHIEYSGMKFGLFFVGEYIGIVTVSALMVTLFFGGWHGPFLPPFVWFALKTAFFMMMFILIRASLPRPRYDQVMSFGWKVCLPLTLINLLVTAAVILWQAQ.

Transmembrane regions (helical) follow at residues Ile-11–Phe-31, Asn-50–Phe-69, Val-81–Val-101, Ile-114–Gly-134, Val-154–Phe-174, Leu-186–Val-206, Phe-237–Phe-257, Leu-265–Ile-285, and Val-304–Ala-324.

The protein belongs to the complex I subunit 1 family. NDH-1 is composed of 13 different subunits. Subunits NuoA, H, J, K, L, M, N constitute the membrane sector of the complex.

It localises to the cell inner membrane. It catalyses the reaction a quinone + NADH + 5 H(+)(in) = a quinol + NAD(+) + 4 H(+)(out). Its function is as follows. NDH-1 shuttles electrons from NADH, via FMN and iron-sulfur (Fe-S) centers, to quinones in the respiratory chain. The immediate electron acceptor for the enzyme in this species is believed to be ubiquinone. Couples the redox reaction to proton translocation (for every two electrons transferred, four hydrogen ions are translocated across the cytoplasmic membrane), and thus conserves the redox energy in a proton gradient. This subunit may bind ubiquinone. The chain is NADH-quinone oxidoreductase subunit H from Salmonella arizonae (strain ATCC BAA-731 / CDC346-86 / RSK2980).